Consider the following 421-residue polypeptide: Phosphoglycerate kinase, cytosolic (421 aa).

The (2R)-3-phosphoglycerate site is built by Val23, Asp24, Phe25, Asn26, Arg39, Ser61, His62, Gly64, Arg65, Arg135, His172, and Arg173. ADP-binding residues include Gly218 and Ala219. Gly218 is a CDP binding site. Residues Ala219 and Lys220 each coordinate AMP. Residue Ala219 participates in ATP binding. Ala219 serves as a coordination point for Mg(2+). Lys220 provides a ligand contact to (2R)-3-phosphoglycerate. Residue Asp223 coordinates CDP. Residue Asp223 participates in Mg(2+) binding. Lys224 and Gly242 together coordinate ADP. Lys224 lines the AMP pocket. Lys224 is a binding site for ATP. Residue Gly242 participates in CDP binding. Residues Ala243 and Ala315 each contribute to the AMP site. ATP is bound by residues Ala243 and Ala315. ADP is bound by residues Ala315 and Asn339. The CDP site is built by Gly340 and Phe345. Residues Phe345, Glu346, Asp378, and Ser379 each coordinate ADP. An AMP-binding site is contributed by Glu346. Glu346, Asp378, and Ser379 together coordinate ATP. Residue Asp378 participates in Mg(2+) binding.

The protein belongs to the phosphoglycerate kinase family. In terms of assembly, monomer. The cofactor is Mg(2+).

It localises to the cytoplasm. The catalysed reaction is (2R)-3-phosphoglycerate + ATP = (2R)-3-phospho-glyceroyl phosphate + ADP. The protein operates within carbohydrate degradation; glycolysis; pyruvate from D-glyceraldehyde 3-phosphate: step 2/5. The sequence is that of Phosphoglycerate kinase, cytosolic from Trypanosoma brucei brucei.